Consider the following 558-residue polypeptide: uncharacterized protein (558 aa).

5 helical membrane passes run 15 to 32 (PSVT…ALGL), 39 to 61 (IGTI…HFGV), 76 to 95 (LVIF…FPSL), 104 to 126 (LISL…ILGI), and 166 to 188 (MALA…LALL). RCK C-terminal domains lie at 196–278 (EERD…LFGK) and 286–370 (RPDI…ILGD). Transmembrane regions (helical) follow at residues 383-405 (LFGG…GVSM), 409-426 (LGLA…GAFG), 446-468 (FGII…DTII), 473-495 (LLWV…WASI), and 533-555 (VVYA…IMIL).

Belongs to the AAE transporter (TC 2.A.81) family.

The protein localises to the cell membrane. This is an uncharacterized protein from Porphyromonas gingivalis (strain ATCC BAA-308 / W83).